Consider the following 104-residue polypeptide: uncharacterized protein (104 aa).

It belongs to the BolA/IbaG family.

This is an uncharacterized protein from Buchnera aphidicola subsp. Acyrthosiphon pisum (strain APS) (Acyrthosiphon pisum symbiotic bacterium).